The chain runs to 109 residues: Class I hydrophobin SC1 (109 aa).

A signal peptide spans 1–22; that stretch reads MRFSLAILALPVLAAATAVPRG. 4 disulfides stabilise this stretch: Cys-27–Cys-88, Cys-34–Cys-82, Cys-35–Cys-69, and Cys-89–Cys-102.

It belongs to the fungal hydrophobin family. Self-assembles to form functional amyloid fibrils called rodlets. Self-assembly into fibrillar rodlets occurs spontaneously at hydrophobic:hydrophilic interfaces and the rodlets further associate laterally to form amphipathic monolayers.

It localises to the secreted. It is found in the cell wall. Aerial growth, conidiation, and dispersal of filamentous fungi in the environment rely upon a capability of their secreting small amphipathic proteins called hydrophobins (HPBs) with low sequence identity. Class I can self-assemble into an outermost layer of rodlet bundles on aerial cell surfaces, conferring cellular hydrophobicity that supports fungal growth, development and dispersal; whereas Class II form highly ordered films at water-air interfaces through intermolecular interactions but contribute nothing to the rodlet structure. SC1 is a dikaryon-specific class I hydrophobin that contributes to the formation of aerial hyphae and fruiting bodies. The protein is Class I hydrophobin SC1 of Schizophyllum commune (Split gill fungus).